A 159-amino-acid chain; its full sequence is Antitoxin Xre (159 aa).

The protein belongs to the MbcA/ParS/Xre antitoxin family. In terms of assembly, homodimer. Forms a complex with cognate toxin Res; the 2 toxin molecules dimerize and each contacts an Xre homodimer. Most Res-Xre contacts are between the antitoxin molecule closest to the toxin.

Probable antitoxin component of a type II toxin-antitoxin (TA) system. In vivo probably neutralizes the toxic effect of cognate toxin Res. This is Antitoxin Xre from Pseudomonas putida (strain ATCC 47054 / DSM 6125 / CFBP 8728 / NCIMB 11950 / KT2440).